A 91-amino-acid polypeptide reads, in one-letter code: Putative regulatory protein Moth_0891 (91 aa).

Belongs to the RemA family.

This is Putative regulatory protein Moth_0891 from Moorella thermoacetica (strain ATCC 39073 / JCM 9320).